Consider the following 352-residue polypeptide: Biotin synthase (352 aa).

In terms of domain architecture, Radical SAM core spans 41-268 (NEVQVSTLLS…ASHVRLSAGR (228 aa)). Residues Cys56, Cys60, and Cys63 each contribute to the [4Fe-4S] cluster site. Cys100, Cys131, Cys191, and Arg263 together coordinate [2Fe-2S] cluster.

This sequence belongs to the radical SAM superfamily. Biotin synthase family. As to quaternary structure, homodimer. The cofactor is [4Fe-4S] cluster. It depends on [2Fe-2S] cluster as a cofactor.

The catalysed reaction is (4R,5S)-dethiobiotin + (sulfur carrier)-SH + 2 reduced [2Fe-2S]-[ferredoxin] + 2 S-adenosyl-L-methionine = (sulfur carrier)-H + biotin + 2 5'-deoxyadenosine + 2 L-methionine + 2 oxidized [2Fe-2S]-[ferredoxin]. It functions in the pathway cofactor biosynthesis; biotin biosynthesis; biotin from 7,8-diaminononanoate: step 2/2. In terms of biological role, catalyzes the conversion of dethiobiotin (DTB) to biotin by the insertion of a sulfur atom into dethiobiotin via a radical-based mechanism. The sequence is that of Biotin synthase from Marinobacter nauticus (strain ATCC 700491 / DSM 11845 / VT8) (Marinobacter aquaeolei).